A 387-amino-acid polypeptide reads, in one-letter code: MANGNASSDGPGNPLAAVVSTTGGVMGGAPSSAVSTYVKLVLLGLIICISLVGNLVVSLLVLRDRALHKAPYYFLLDLCLADTIRSAVCFPFVLVSIKNGSAWTYSVLSCKVVAFMAVLFCFHAAFMLFCISVTRYMAIAHHRFYSKRMTFWTCVAVVCMVWTLSVAMAFPPVFDVGTYKFIREEDQCIFEHRYFKANDTLGFMLMLAVLILATHVVYMKLLLFEYKHRKMKPVQMVPAISQNWTFHGPGATGQAAANWIAGFGRGPMPPTLLGIRQNLHNQNRRLLGMEEFKAEKQLGRMFYVITLFFLVLWSPYIVACYWRVFVKACTIPHRYLSTTVWMSFAQAGVNPIICFFLNKDLKKGLLAHLPPCCRTPPQLPREPYCVM.

Residues 1 to 40 lie on the Extracellular side of the membrane; the sequence is MANGNASSDGPGNPLAAVVSTTGGVMGGAPSSAVSTYVKL. Residue asparagine 5 is glycosylated (N-linked (GlcNAc...) asparagine). Residues 41-61 traverse the membrane as a helical segment; it reads VLLGLIICISLVGNLVVSLLV. The Cytoplasmic segment spans residues 62-87; it reads LRDRALHKAPYYFLLDLCLADTIRSA. A helical membrane pass occupies residues 88-108; that stretch reads VCFPFVLVSIKNGSAWTYSVL. Over 109–111 the chain is Extracellular; it reads SCK. A disulfide bond links cysteine 110 and cysteine 188. The helical transmembrane segment at 112 to 132 threads the bilayer; that stretch reads VVAFMAVLFCFHAAFMLFCIS. At 133 to 153 the chain is on the cytoplasmic side; sequence VTRYMAIAHHRFYSKRMTFWT. A helical membrane pass occupies residues 154-174; the sequence is CVAVVCMVWTLSVAMAFPPVF. The Extracellular segment spans residues 175–202; sequence DVGTYKFIREEDQCIFEHRYFKANDTLG. N-linked (GlcNAc...) asparagine glycosylation occurs at asparagine 198. The chain crosses the membrane as a helical span at residues 203–223; it reads FMLMLAVLILATHVVYMKLLL. The Cytoplasmic portion of the chain corresponds to 224–301; that stretch reads FEYKHRKMKP…FKAEKQLGRM (78 aa). A helical transmembrane segment spans residues 302 to 322; it reads FYVITLFFLVLWSPYIVACYW. The Extracellular portion of the chain corresponds to 323–335; sequence RVFVKACTIPHRY. The helical transmembrane segment at 336–356 threads the bilayer; it reads LSTTVWMSFAQAGVNPIICFF. Topologically, residues 357–387 are cytoplasmic; that stretch reads LNKDLKKGLLAHLPPCCRTPPQLPREPYCVM.

It belongs to the G-protein coupled receptor 1 family.

It is found in the cell membrane. Functionally, is a receptor for the SMIM20 derived peptides Phoenixin-14 and Phoenixin-20. It mediates the Phoenixin-14 and Phoenixin-20 augmentation of gonadotropin-releasing hormone (GNRH) signaling in the hypothalamus and pituitary gland. In the ovary, it mediates the effects of Phoenixin-14 and Phoenixin-20 induced granulosa cell proliferation during follicular growth. The chain is Probable G-protein coupled receptor 173 (gpr173) from Danio rerio (Zebrafish).